The sequence spans 127 residues: Fumarate reductase subunit C (127 aa).

The next 3 membrane-spanning stretches (helical) occupy residues Ala30–Val50, Leu67–Phe87, and Ile107–Val127.

The protein belongs to the FrdC family. Part of an enzyme complex containing four subunits: a flavoprotein (FrdA), an iron-sulfur protein (FrdB), and two hydrophobic anchor proteins (FrdC and FrdD).

The protein resides in the cell inner membrane. In terms of biological role, anchors the catalytic components of the fumarate reductase complex to the cell membrane, binds quinones. The sequence is that of Fumarate reductase subunit C from Vibrio cholerae serotype O1 (strain ATCC 39541 / Classical Ogawa 395 / O395).